The chain runs to 513 residues: Pleiotropic regulator 1 (513 aa).

Met-1 bears the N-acetylmethionine mark. The interval 60–79 (TSKENLKEKGPQNATDSYPH) is disordered. Ser-119 bears the Phosphoserine mark. The tract at residues 136 to 160 (VDANRTGPAGSEYRHPGASDRSQPT) is disordered. Position 200 is a phosphoserine (Ser-200). WD repeat units follow at residues 201 to 240 (GHLG…LKLS), 243 to 282 (GHIS…VIRH), 285 to 324 (GHLS…SVHT), 327 to 366 (GHTN…TRVT), 369 to 409 (NHKK…QNLS), 410 to 448 (GHNA…NFQR), and 459 to 498 (DSES…TEET). A Phosphoserine modification is found at Ser-390.

Belongs to the WD repeat PRL1/PRL2 family. In terms of assembly, identified in the spliceosome C complex. Component of the PRP19-CDC5L splicing complex composed of a core complex comprising a homotetramer of PRPF19, CDC5L, PLRG1 and BCAS2, and at least three less stably associated proteins CTNNBL1, CWC15 and HSPA8. Interacts (via its WD40 repeat domain) directly with CDC5L (via its C-terminal); the interaction is required for mRNA splicing but not for spliceosome assembly. Component of the minor spliceosome, which splices U12-type introns. Within this complex, interacts with CRIPT. Also interacts directly in the complex with BCAS2 and PRPF19. Interacts with USB1.

The protein localises to the nucleus. It localises to the nucleus speckle. In terms of biological role, involved in pre-mRNA splicing as component of the spliceosome. Component of the PRP19-CDC5L complex that forms an integral part of the spliceosome and is required for activating pre-mRNA splicing. As a component of the minor spliceosome, involved in the splicing of U12-type introns in pre-mRNAs. The sequence is that of Pleiotropic regulator 1 (Plrg1) from Mus musculus (Mouse).